Consider the following 395-residue polypeptide: Zinc finger protein HD1 (395 aa).

A B box-type 1; atypical zinc finger spans residues 30–72 (PWARPCDGCRAAPSVVYCRADAAYLCASCDARVHAANRVASRH). Zn(2+) contacts are provided by Cys35, Cys38, Cys58, His63, Cys78, Cys81, Cys101, and His106. The B box-type 2; atypical zinc finger occupies 73–117 (ERVRVCEACERAPAALACRADAAALCVACDVQVHSANPLPAITIP). Disordered stretches follow at residues 147–176 (SKDS…SNNG) and 208–228 (GMHE…EFAE). Residues 152–175 (NNNNNNNNNDNDNNDNNNSNSSNN) show a composition bias toward low complexity. The CCT domain occupies 326 to 368 (REARVLRYREKKKARKFEKTIRYETRKAYAEARPRIKGRFAKR).

This sequence belongs to the CONSTANS family. In terms of assembly, interacts with HAL3 in the dark. In terms of processing, phosphorylated by OSK4 in the presence of HDR1.

The protein localises to the nucleus. Probable transcription factor involved in the regulation of flower development. Required for the promotion of flowering under short day (SD) conditions and the suppression of flowering under long day (LD) conditions. Positively regulates the floral activator HEADING DATE 3a (HD3A) under SD and negatively under LD conditions. The polypeptide is Zinc finger protein HD1 (Oryza sativa subsp. japonica (Rice)).